We begin with the raw amino-acid sequence, 198 residues long: dTTP/UTP pyrophosphatase (198 aa).

Asp78 functions as the Proton acceptor in the catalytic mechanism.

Belongs to the Maf family. YhdE subfamily. Requires a divalent metal cation as cofactor.

It is found in the cytoplasm. It catalyses the reaction dTTP + H2O = dTMP + diphosphate + H(+). It carries out the reaction UTP + H2O = UMP + diphosphate + H(+). Its function is as follows. Nucleoside triphosphate pyrophosphatase that hydrolyzes dTTP and UTP. May have a dual role in cell division arrest and in preventing the incorporation of modified nucleotides into cellular nucleic acids. In Chromobacterium violaceum (strain ATCC 12472 / DSM 30191 / JCM 1249 / CCUG 213 / NBRC 12614 / NCIMB 9131 / NCTC 9757 / MK), this protein is dTTP/UTP pyrophosphatase.